The sequence spans 353 residues: Photosystem II D2 protein (353 aa).

Thr2 is modified (N-acetylthreonine). Residue Thr2 is modified to Phosphothreonine. The chain crosses the membrane as a helical span at residues 41 to 61 (CAYFALGGWFTGTTFVTSWYT). His118 contacts chlorophyll a. The chain crosses the membrane as a helical span at residues 125–141 (GFMLRQFELARSVQLRP). The pheophytin a site is built by Gln130 and Asn143. Residues 153 to 166 (VFVSVFLIYPLGQS) traverse the membrane as a helical segment. His198 serves as a coordination point for chlorophyll a. The helical transmembrane segment at 208–228 (AALLCAIHGATVENTLFEDGD) threads the bilayer. Residues His215 and Phe262 each contribute to the a plastoquinone site. Position 215 (His215) interacts with Fe cation. His269 contributes to the Fe cation binding site. The chain crosses the membrane as a helical span at residues 279–295 (GLWMSALGVVGLALNLR).

It belongs to the reaction center PufL/M/PsbA/D family. As to quaternary structure, PSII is composed of 1 copy each of membrane proteins PsbA, PsbB, PsbC, PsbD, PsbE, PsbF, PsbH, PsbI, PsbJ, PsbK, PsbL, PsbM, PsbT, PsbX, PsbY, PsbZ, Psb30/Ycf12, at least 3 peripheral proteins of the oxygen-evolving complex and a large number of cofactors. It forms dimeric complexes. The D1/D2 heterodimer binds P680, chlorophylls that are the primary electron donor of PSII, and subsequent electron acceptors. It shares a non-heme iron and each subunit binds pheophytin, quinone, additional chlorophylls, carotenoids and lipids. There is also a Cl(-1) ion associated with D1 and D2, which is required for oxygen evolution. The PSII complex binds additional chlorophylls, carotenoids and specific lipids. serves as cofactor.

It localises to the plastid. The protein resides in the chloroplast thylakoid membrane. It catalyses the reaction 2 a plastoquinone + 4 hnu + 2 H2O = 2 a plastoquinol + O2. In terms of biological role, photosystem II (PSII) is a light-driven water:plastoquinone oxidoreductase that uses light energy to abstract electrons from H(2)O, generating O(2) and a proton gradient subsequently used for ATP formation. It consists of a core antenna complex that captures photons, and an electron transfer chain that converts photonic excitation into a charge separation. The D1/D2 (PsbA/PsbD) reaction center heterodimer binds P680, the primary electron donor of PSII as well as several subsequent electron acceptors. D2 is needed for assembly of a stable PSII complex. The chain is Photosystem II D2 protein from Platanus occidentalis (Sycamore).